The following is a 154-amino-acid chain: MAIELDLQLAVENEEGLPSEQDFQLWLDKTIPLFQPQAELTIRIVDEQESHELNHEYRGKDKPTNVLSFPFEVPPGMEMDLLGDLIICRQVVEKEAVEQNKPLLAHWAHMVVHGSLHLLGYDHIEDDEAEEMESLETEIMQGMGYEDPYIAEKE.

Residues His-113, His-117, and His-123 each contribute to the Zn(2+) site.

It belongs to the endoribonuclease YbeY family. Zn(2+) is required as a cofactor.

The protein localises to the cytoplasm. Single strand-specific metallo-endoribonuclease involved in late-stage 70S ribosome quality control and in maturation of the 3' terminus of the 16S rRNA. The chain is Endoribonuclease YbeY from Vibrio campbellii (strain ATCC BAA-1116).